Consider the following 1035-residue polypeptide: Unconventional myosin IC (1035 aa).

Positions 21–703 (GVQDFVLLEN…TLFDTEDAYQ (683 aa)) constitute a Myosin motor domain. An ATP-binding site is contributed by 114 to 121 (GESGSGKT). Residue Ser-304 is modified to Phosphoserine. Thr-310 is modified (phosphothreonine). The interval 578–600 (LNNLMDILMCKEPSYIRCIKPND) is actin-binding. IQ domains follow at residues 696-728 (FDTEDAYQEKKHEIAAIIQAHWKGLMQRRKYLK), 729-751 (LRAQVIIMQSYCRRKLAQQAAKK), and 752-779 (RREAADKIRAFIKGFITRNDAPNGFNEE). The region spanning 857–1035 (KNNYASSVST…KGHLVIIGTQ (179 aa)) is the TH1 domain.

It belongs to the TRAFAC class myosin-kinesin ATPase superfamily. Myosin family. In terms of assembly, binds F-actin. In terms of tissue distribution, in the embryo, expressed in gastric caeca, midgut cells of the proventriculus, and in the mid and hindgut. In the larval and adult gut brush border, expressed in the microvilli. Also expressed at high levels in follicle cells during oogenesis.

The protein resides in the cytoplasm. The protein localises to the cell cortex. Its subcellular location is the cell membrane. Its function is as follows. Unconventional myosin that functions as actin-based motor protein with ATPase activity. Binds to membranes enriched in phosphatidylinositol 4-5-bisphosphate, and can glide along actin filaments when anchored to a lipid bilayer. Functions as antagonist for Myo31DF, an unconventional myosin with an essential role in the establishment of body left-right asymmetry. The protein is Unconventional myosin IC (Myo61F) of Drosophila melanogaster (Fruit fly).